The chain runs to 168 residues: Phosphopantetheine adenylyltransferase (168 aa).

Threonine 14 is a substrate binding site. ATP is bound by residues 14–15 and histidine 22; that span reads TF. Residues lysine 46, leucine 78, and arginine 92 each coordinate substrate. ATP contacts are provided by residues 93 to 95, glutamate 103, and 128 to 134; these read GLR and YSFISSS.

The protein belongs to the bacterial CoaD family. In terms of assembly, homohexamer. Mg(2+) serves as cofactor.

It is found in the cytoplasm. It carries out the reaction (R)-4'-phosphopantetheine + ATP + H(+) = 3'-dephospho-CoA + diphosphate. Its pathway is cofactor biosynthesis; coenzyme A biosynthesis; CoA from (R)-pantothenate: step 4/5. Reversibly transfers an adenylyl group from ATP to 4'-phosphopantetheine, yielding dephospho-CoA (dPCoA) and pyrophosphate. This is Phosphopantetheine adenylyltransferase from Xanthomonas campestris pv. campestris (strain 8004).